We begin with the raw amino-acid sequence, 123 residues long: Preprofallaxidin-3 (123 aa).

Positions 1-22 (MASLKKSLFLVLFLGLVSLSIC) are cleaved as a signal peptide. Residues 23–46 (EEKKRENEDDAEDENHEEESEEKR) constitute a propeptide that is removed on maturation. The disordered stretch occupies residues 26-46 (KRENEDDAEDENHEEESEEKR). Residues 30-42 (EDDAEDENHEEES) are compositionally biased toward acidic residues. Position 62 is a leucine amide (Leu62). Residues 66 to 70 (SEEKR) constitute a propeptide that is removed on maturation. Phe74 is subject to Phenylalanine amide. Residues 78-82 (SEEKR) constitute a propeptide that is removed on maturation. Position 88 is a phenylalanine amide (Phe88). Residues 92–96 (SEEKR) constitute a propeptide that is removed on maturation. Position 102 is an isoleucine amide (Ile102). The propeptide occupies 106 to 110 (SEEKR). Ile116 carries the isoleucine amide modification. The propeptide occupies 120 to 123 (KKKK).

Belongs to the frog skin active peptide (FSAP) family. Brevinin subfamily. Expressed by the skin glands.

It localises to the secreted. Its function is as follows. Fallaxidin-1.1 shows no antibacterial activity against Gram-positive or Gram-negative bacteria. Does not inhibit the formation of NO by neuronal nitric oxide synthase. Has no effect on splenocyte proliferation or smooth muscle contraction. In terms of biological role, fallaxidin-1.2 shows no antibacterial activity against Gram-positive or Gram-negative bacteria. Does not inhibit the formation of NO by neuronal nitric oxide synthase. Has no effect on splenocyte proliferation or smooth muscle contraction. Fallaxidin-1.3 shows no antibacterial activity against Gram-positive or Gram-negative bacteria. Does not inhibit the formation of NO by neuronal nitric oxide synthase. Has no effect on splenocyte proliferation or smooth muscle contraction. Functionally, fallaxidin-3.2 shows antibacterial activity against the Gram-positive bacteria E.faecalis (MIC=100 uM) and L.lactis (MIC=500 uM). No antibacterial activity against the Gram-positive bacteria B.cereus, L.innocua, M.luteus, S.epidermidis, S.uberis and S.aureus, or the Gram-negative bacteria E.cloacae and E.coli. The polypeptide is Preprofallaxidin-3 (Litoria fallax (Eastern dwarf tree frog)).